The sequence spans 794 residues: MQVENLHTSVACNRCTECADWGPNGWIAYGACNAIAIMDPKFQGNSAKVLFTLVEHTKRVNTVRWLDCDKLLSGGDDAIAILWELDETGTTKSFTLKGHTSGVNTVDGIRQQDGSWLLATAAADTTIKLWTFQDNNYVCFQTISLSDGFCFCLRLQLLPKSNQVLLAFSGDDETVSLWSEQVETAGEGDSLGRQFQRKHKLTGHEDWVRGLDFVVDGEDLLLASGSQDNFIRLWRIAPRSKEQMQENRVDLHQLSHNDDEIKVEEKILQLGKEAWYAVSLESVLYGHEGWIYGVHWHKTPDQELRLLSASIDKTVIIWAPTEEGIWLEEVRVGEVGGNSVGFYGGKFSGDGHSIMAHSYQGGFHIWSQDPDRPQLWTPGVIVGGHYGEVRDLAWEHSGAYLMTASADQTTRLHAPWLQDGANPTWHELARPQIHGYDMQALALLSRYKFASGAEEKIVRTFQAPANFIENFRHISGIENDDAGDVLLDSLPKGASVPSLGLSNKAVYKVDSEVESTSKTSKDEYPDNYFVPIALETPPQEETLMQNTLWPELQKLYGHGYEIFALAATADGSLLASTCKASNAEHAQIILWNPSNWKQIQKLSGHQLTVTQLSFSPDSRYLLSVSRDRRWCLYERQDSSVSYQLVASTDKSNGVHTRIIWSCDWSHDGQFFVTSSRDGKVVVWKKEEDCKESSLNGWQANGVLELKNESITAVAFSNSYLSGTDDTYILALGTETGLIKIYQFVRGAWKLLSDLNKSQAHHLTVRRLQFRPGKQLQLASCGEDHLVRIYDIKLT.

WD repeat units lie at residues 55 to 93, 98 to 140, 147 to 188, 203 to 244, 286 to 328, 337 to 376, 384 to 423, 433 to 472, 557 to 601, 604 to 643, 654 to 693, 705 to 751, and 759 to 794; these read EHTKRVNTVRWLDCDKLLSGGDDAIAILWELDETGTTKS, GHTS…YVCF, DGFC…AGEG, GHED…KEQM, GHEG…IWLE, GNSVGFYGGKFSGDGHSIMAHSYQGGFHIWSQDPDRPQLW, GHYGEVRDLAWEHSGAYLMTASADQTTRLHAPWLQDGANP, IHGYDMQALALLSRYKFASGAEEKIVRTFQAPANFIENFR, GHGY…QIQK, GHQLTVTQLSFSPDSRYLLSVSRDRRWCLYERQDSSVSYQ, VHTRIIWSCDWSHDGQFFVTSSRDGKVVVWKKEEDCKESS, LKNE…WKLL, and AHHLTVRRLQFRPGKQLQLASCGEDHLVRIYDIKLT.

It belongs to the WD repeat ELP2 family. As to quaternary structure, component of the elongator complex composed of Elp1, Elp2, Elp3, Elp4, Elp5 and Elp6. The elongator complex associates with and stabilizes microtubules; efficient interaction requires the full complex.

It localises to the cytoplasm. It is found in the nucleus. Its subcellular location is the cytoskeleton. The protein resides in the spindle. It functions in the pathway tRNA modification; 5-methoxycarbonylmethyl-2-thiouridine-tRNA biosynthesis. Its function is as follows. Component of the elongator complex, which is required for multiple tRNA modifications, including mcm5U (5-methoxycarbonylmethyl uridine), mcm5s2U (5-methoxycarbonylmethyl-2-thiouridine), and ncm5U (5-carbamoylmethyl uridine). The elongator complex catalyzes the formation of carboxymethyluridine in the wobble base at position 34 in tRNAs. Binding by the elongator complex stabilizes microtubules and promotes their growth. This induces central spindle asymmetry, promoting polarized signaling endosome trafficking during asymmetric cell division and cell fate assignation of sensory organ precursor cells. Involved in the regulation of the STAT pathway. The protein is Elongator complex protein 2 of Drosophila melanogaster (Fruit fly).